Reading from the N-terminus, the 248-residue chain is MAGHSQFKNIMHRKGRQDAQKSKLFSKLAREITVAAKLGTPDPAMNARLRSAIIAARQENMPKDNIERAIKKAIGSDGENYDEIRYEGYGPGGVAVIVEALTDNRNRAASDIRSYFTKSGGNLGETGSVAFMFDRTGIIEFDAKVASADDMLDAAIEAGADDVLSSDSGHEVYASQDSFREVAKALEQKFGEARKAALTWKPQNTVPVDDETGEKLLKLIDLLQEHDDVQNVYANFEVSDALMAKMGG.

The tract at residues 1–21 (MAGHSQFKNIMHRKGRQDAQK) is disordered.

Belongs to the TACO1 family.

Its subcellular location is the cytoplasm. This is Probable transcriptional regulatory protein RPC_4807 from Rhodopseudomonas palustris (strain BisB18).